A 100-amino-acid polypeptide reads, in one-letter code: NADH-quinone oxidoreductase subunit K (100 aa).

The next 3 membrane-spanning stretches (helical) occupy residues Pro3–Leu23, Ile29–Phe49, and Phe63–Ile83.

Belongs to the complex I subunit 4L family. NDH-1 is composed of 15 different subunits. Subunits NuoA, H, J, K, L, M, N constitute the membrane sector of the complex.

The protein localises to the cell membrane. The enzyme catalyses a quinone + NADH + 5 H(+)(in) = a quinol + NAD(+) + 4 H(+)(out). NDH-1 shuttles electrons from NADH, via FMN and iron-sulfur (Fe-S) centers, to quinones in the respiratory chain. The immediate electron acceptor for the enzyme in this species is believed to be a menaquinone. Couples the redox reaction to proton translocation (for every two electrons transferred, four hydrogen ions are translocated across the cytoplasmic membrane), and thus conserves the redox energy in a proton gradient. This Deinococcus geothermalis (strain DSM 11300 / CIP 105573 / AG-3a) protein is NADH-quinone oxidoreductase subunit K.